Here is a 229-residue protein sequence, read N- to C-terminus: Cytidylate kinase (229 aa).

Residue 12–20 participates in ATP binding; that stretch reads GPSGSGKGT.

It belongs to the cytidylate kinase family. Type 1 subfamily.

The protein localises to the cytoplasm. The catalysed reaction is CMP + ATP = CDP + ADP. The enzyme catalyses dCMP + ATP = dCDP + ADP. The chain is Cytidylate kinase from Pseudomonas syringae pv. tomato (strain ATCC BAA-871 / DC3000).